A 255-amino-acid chain; its full sequence is Type III pantothenate kinase (255 aa).

Residue 12 to 19 (DIGNSYTK) coordinates ATP. 109-112 (GDDL) is a substrate binding site. Asp-111 serves as the catalytic Proton acceptor. Position 133 (Thr-133) interacts with ATP. Thr-185 is a binding site for substrate.

Belongs to the type III pantothenate kinase family. Homodimer. NH4(+) serves as cofactor. Requires K(+) as cofactor.

It localises to the cytoplasm. It catalyses the reaction (R)-pantothenate + ATP = (R)-4'-phosphopantothenate + ADP + H(+). It functions in the pathway cofactor biosynthesis; coenzyme A biosynthesis; CoA from (R)-pantothenate: step 1/5. Catalyzes the phosphorylation of pantothenate (Pan), the first step in CoA biosynthesis. This chain is Type III pantothenate kinase, found in Malacoplasma penetrans (strain HF-2) (Mycoplasma penetrans).